A 423-amino-acid chain; its full sequence is Gamma-glutamyl phosphate reductase (423 aa).

The protein belongs to the gamma-glutamyl phosphate reductase family.

Its subcellular location is the cytoplasm. The enzyme catalyses L-glutamate 5-semialdehyde + phosphate + NADP(+) = L-glutamyl 5-phosphate + NADPH + H(+). The protein operates within amino-acid biosynthesis; L-proline biosynthesis; L-glutamate 5-semialdehyde from L-glutamate: step 2/2. Functionally, catalyzes the NADPH-dependent reduction of L-glutamate 5-phosphate into L-glutamate 5-semialdehyde and phosphate. The product spontaneously undergoes cyclization to form 1-pyrroline-5-carboxylate. This is Gamma-glutamyl phosphate reductase from Desulfovibrio desulfuricans (strain ATCC 27774 / DSM 6949 / MB).